Here is a 969-residue protein sequence, read N- to C-terminus: GATOR2 complex protein Wdr59 (969 aa).

The segment at 1–24 is disordered; it reads MPPTETLRPGERGTAGGPGAGAPE. WD repeat units lie at residues 127–167, 172–211, 215–255, 258–303, and 307–351; these read GHTR…KPAL, VCMSGATQVGFNRVSGNLLAAAHDGDLRIWDIRKGSCPTH, AHLN…RAEK, TTMS…DPIC, and GHTD…LKLC. T373 bears the Phosphothreonine mark. One can recognise an RWD domain in the interval 435 to 538; the sequence is HEFSLLNTNM…RALVAAMKKK (104 aa). The C4-type zinc-finger motif lies at 891-911; that stretch reads ECRKCAKPKRTPKCEPCKRPV. The Zn(2+) site is built by C892, C895, C904, C907, C917, C928, H933, H936, H939, C950, C953, C955, and C957. The RING-type; atypical zinc-finger motif lies at 912–960; that stretch reads LFCVLCRLPVKGAANACLACGHGGHIDHMMQWFEKHNVCATCGCKCLER.

This sequence belongs to the WD repeat WDR59 family. Component of the GATOR complex consisting of mio, Nup44A/Seh1, Im11, Nplr3, Nplr2, Wdr24, Wdr59 and Sec13. Within the GATOR complex, probable component of the GATOR2 subcomplex which is likely composed of mio, Nup44A/Seh1, Wdr24, Wdr59 and Sec13. The GATOR2 complex associates with unmet in the absence of S-adenosyl-L-methionine; the mio-Wdr24-Nup44A subcomplex is essential and sufficient for this interaction while Wdr59 and Sec13 are dispensable. This association acts as a nutrient sensor to inhibit mTORC1 signaling in the absence of methionine.

Its subcellular location is the lysosome membrane. In terms of biological role, a component of the GATOR complex, which functions as a regulator of the amino acid-sensing branch of the mTORC1 signaling pathway. The two GATOR subcomplexes, GATOR1 and GATOR2, regulate the mTORC1 pathway in order to mediate metabolic homeostasis, female gametogenesis and the response to amino acid limitation and complete starvation. GATOR2 activates the mTORC1 signaling pathway through the inhibition of the GATOR1 subcomplex, controlling the switch to cell proliferation and growth under nutrient replete conditions and during female oocyte development. Acts as an atypical component of the GATOR2 subcomplex, which can either promote or inhibit mTORC1 signaling, depending on tissues: inhibits mTORC1 activity by preventing the activity of GATOR2 in the ovary and the eye imaginal disk brain, while it promotes mTORC1 activity in the fat body. The polypeptide is GATOR2 complex protein Wdr59 (Drosophila melanogaster (Fruit fly)).